A 302-amino-acid polypeptide reads, in one-letter code: Nucleotide-binding protein STH186 (302 aa).

Residue 15 to 22 participates in ATP binding; that stretch reads GMSGAGKT. 66-69 is a GTP binding site; it reads DIRG.

Belongs to the RapZ-like family.

Functionally, displays ATPase and GTPase activities. The sequence is that of Nucleotide-binding protein STH186 from Symbiobacterium thermophilum (strain DSM 24528 / JCM 14929 / IAM 14863 / T).